A 265-amino-acid chain; its full sequence is Inositol-1-monophosphatase (265 aa).

Residues Glu-69, Asp-87, Ile-89, and Asp-90 each coordinate Mg(2+). Glu-69 lines the substrate pocket. Substrate-binding positions include 89–92 (IDGT), Arg-185, and Asp-214. Asp-214 contributes to the Mg(2+) binding site.

It belongs to the inositol monophosphatase superfamily. Mg(2+) is required as a cofactor.

It catalyses the reaction a myo-inositol phosphate + H2O = myo-inositol + phosphate. The enzyme catalyses a ribonucleoside 5'-phosphate + H2O = a ribonucleoside + phosphate. Hydrolyzes myo-inositol monophosphate. Catalyzes the dephosphorylation of GMP and IMP. The sequence is that of Inositol-1-monophosphatase from Bacillus subtilis (strain 168).